Consider the following 156-residue polypeptide: Small ribosomal subunit protein uS7 (156 aa).

This sequence belongs to the universal ribosomal protein uS7 family. Part of the 30S ribosomal subunit. Contacts proteins S9 and S11.

Functionally, one of the primary rRNA binding proteins, it binds directly to 16S rRNA where it nucleates assembly of the head domain of the 30S subunit. Is located at the subunit interface close to the decoding center, probably blocks exit of the E-site tRNA. This is Small ribosomal subunit protein uS7 from Vibrio cholerae serotype O1 (strain ATCC 39315 / El Tor Inaba N16961).